Here is an 864-residue protein sequence, read N- to C-terminus: Translation initiation factor IF-2 (864 aa).

Residues 140-171 (DSRSLNTKKENKLKISNKDEQNKKFNQHRESN) are compositionally biased toward basic and acidic residues. The tract at residues 140-179 (DSRSLNTKKENKLKISNKDEQNKKFNQHRESNSFDLNHKK) is disordered. A tr-type G domain is found at 364-533 (IRAPVVTIMG…LLQAEMLELK (170 aa)). Residues 373–380 (GHVDHGKT) form a G1 region. Residue 373–380 (GHVDHGKT) participates in GTP binding. A G2 region spans residues 398–402 (GITQN). The tract at residues 419-422 (DTPG) is G3. GTP contacts are provided by residues 419–423 (DTPGH) and 473–476 (NKID). The tract at residues 473-476 (NKID) is G4. Residues 509–511 (SAK) are G5.

The protein belongs to the TRAFAC class translation factor GTPase superfamily. Classic translation factor GTPase family. IF-2 subfamily.

It is found in the cytoplasm. In terms of biological role, one of the essential components for the initiation of protein synthesis. Protects formylmethionyl-tRNA from spontaneous hydrolysis and promotes its binding to the 30S ribosomal subunits. Also involved in the hydrolysis of GTP during the formation of the 70S ribosomal complex. This chain is Translation initiation factor IF-2, found in Buchnera aphidicola subsp. Acyrthosiphon pisum (strain 5A).